A 331-amino-acid polypeptide reads, in one-letter code: Fructose-1,6-bisphosphatase class 1 2 (331 aa).

Residues E80, D98, L100, and D101 each contribute to the Mg(2+) site. Substrate is bound by residues D101 to S104 and N189. A Mg(2+)-binding site is contributed by E261.

It belongs to the FBPase class 1 family. Homotetramer. It depends on Mg(2+) as a cofactor.

The protein localises to the cytoplasm. The catalysed reaction is beta-D-fructose 1,6-bisphosphate + H2O = beta-D-fructose 6-phosphate + phosphate. It participates in carbohydrate biosynthesis; Calvin cycle. In Cereibacter sphaeroides (strain ATCC 17023 / DSM 158 / JCM 6121 / CCUG 31486 / LMG 2827 / NBRC 12203 / NCIMB 8253 / ATH 2.4.1.) (Rhodobacter sphaeroides), this protein is Fructose-1,6-bisphosphatase class 1 2.